The chain runs to 914 residues: TRPM8 channel-associated factor 3 (914 aa).

The Peptidase M60 domain occupies 533-832 (NSWVSTGLYL…TYLQLQEGFG (300 aa)).

The protein belongs to the TCAF family.

Functionally, may play a role in the regulation of the cation channel TRPM8 activity. In Rattus norvegicus (Rat), this protein is TRPM8 channel-associated factor 3.